A 445-amino-acid chain; its full sequence is Xylose isomerase (445 aa).

Catalysis depends on residues His-109 and Asp-112. The Mg(2+) site is built by Glu-240, Glu-276, His-279, Asp-304, Asp-315, Asp-317, and Asp-347.

Belongs to the xylose isomerase family. As to quaternary structure, homotetramer. Mg(2+) is required as a cofactor.

It localises to the cytoplasm. It carries out the reaction alpha-D-xylose = alpha-D-xylulofuranose. This chain is Xylose isomerase, found in Xanthomonas oryzae pv. oryzae (strain MAFF 311018).